A 340-amino-acid chain; its full sequence is Ketol-acid reductoisomerase (NADP(+)) (340 aa).

The region spanning 1–182 (MTVTMQYEKD…GSARVGLLET (182 aa)) is the KARI N-terminal Rossmann domain. NADP(+) contacts are provided by residues 26 to 29 (YGSQ), R49, S53, and 83 to 86 (DEIQ). The active site involves H108. G134 serves as a coordination point for NADP(+). The region spanning 183–328 (TFKEETEEDL…AELRKAMPFV (146 aa)) is the KARI C-terminal knotted domain. Mg(2+) contacts are provided by D191, E195, E227, and E231. Residue S252 coordinates substrate.

This sequence belongs to the ketol-acid reductoisomerase family. Mg(2+) serves as cofactor.

It carries out the reaction (2R)-2,3-dihydroxy-3-methylbutanoate + NADP(+) = (2S)-2-acetolactate + NADPH + H(+). The catalysed reaction is (2R,3R)-2,3-dihydroxy-3-methylpentanoate + NADP(+) = (S)-2-ethyl-2-hydroxy-3-oxobutanoate + NADPH + H(+). The protein operates within amino-acid biosynthesis; L-isoleucine biosynthesis; L-isoleucine from 2-oxobutanoate: step 2/4. It participates in amino-acid biosynthesis; L-valine biosynthesis; L-valine from pyruvate: step 2/4. Functionally, involved in the biosynthesis of branched-chain amino acids (BCAA). Catalyzes an alkyl-migration followed by a ketol-acid reduction of (S)-2-acetolactate (S2AL) to yield (R)-2,3-dihydroxy-isovalerate. In the isomerase reaction, S2AL is rearranged via a Mg-dependent methyl migration to produce 3-hydroxy-3-methyl-2-ketobutyrate (HMKB). In the reductase reaction, this 2-ketoacid undergoes a metal-dependent reduction by NADPH to yield (R)-2,3-dihydroxy-isovalerate. In Streptococcus suis (strain 98HAH33), this protein is Ketol-acid reductoisomerase (NADP(+)).